A 468-amino-acid chain; its full sequence is MCDLIEPQPAEKIGKMKKLRRTLSESFSRIALKKEDTTFDEICVTKMSTRNCQGMDSVIKPLDTIPEDKVRVQRTQSTFDPFEKPTNQVKRVHSENNACINFKTSSAGKESPKVRRHSSPSSPTSPKFGKADSYEKLEKLGEGSYATVYKGKSKVNGKLVALKVIRLQEEEGTPFTAIREASLLKGLKHANIVLLHDIIHTKETLTLVFEYVHTDLCQYMDKHPGGLHPENVKLFLFQLLRGLSYIHQRYILHRDLKPQNLLISDTGELKLADFGLARAKSVPSHTYSNEVVTLWYRPPDVLLGSTEYSTCLDMWGVGCIFVEMIQGVAAFPGMKDIQDQLERIFLVLGTPNEDTWPGVHSLPHFKPERFTLYSSKNLRQAWNKLSYVNHAEDLASKLLQCSPKNRLSAQAALSHEYFSDLPPRLWELTDMSSIFTVPNVRLQPEAGESMRAFGKNNSYGKSLSNSKH.

3 positions are modified to phosphoserine: Ser24, Ser77, and Ser94. The segment at 103-132 (KTSSAGKESPKVRRHSSPSSPTSPKFGKAD) is disordered. At Ser133 the chain carries Phosphoserine. The Protein kinase domain occupies 134-418 (YEKLEKLGEG…AQAALSHEYF (285 aa)). Residues 140-148 (LGEGSYATV) and Lys163 each bind ATP. Residue Asp255 is the Proton acceptor of the active site. The segment at 448–468 (ESMRAFGKNNSYGKSLSNSKH) is disordered. Over residues 455–468 (KNNSYGKSLSNSKH) the composition is skewed to polar residues.

This sequence belongs to the protein kinase superfamily. CMGC Ser/Thr protein kinase family. CDC2/CDKX subfamily. Found in a complex with LRP6, CCNY and CAPRIN2 during G2/M stage; CAPRIN2 functions as a scaffold for the complex by binding to CCNY via its N terminus and to CDK14 via its C terminus. Interacts with CCNY; CCNY mediates its recruitment to the plasma membrane and promotes phosphorylation of LRP6. Interacts with CCDN3 and CDKN1A. Interacts with SEPT8. Interacts with 14-3-3 proteina YWHAB, YWHAE, YWHAH and YWHAQ.

The protein resides in the cell membrane. It is found in the cytoplasm. It localises to the nucleus. The enzyme catalyses L-seryl-[protein] + ATP = O-phospho-L-seryl-[protein] + ADP + H(+). It carries out the reaction L-threonyl-[protein] + ATP = O-phospho-L-threonyl-[protein] + ADP + H(+). With respect to regulation, serine/threonine-protein kinase activity is promoted by associated cyclins CCDN3 and CCNY and repressed by CDKN1A. Serine/threonine-protein kinase involved in the control of the eukaryotic cell cycle, whose activity is controlled by an associated cyclin. Acts as a cell-cycle regulator of Wnt signaling pathway during G2/M phase by mediating the phosphorylation of LRP6 at 'Ser-1490', leading to the activation of the Wnt signaling pathway. Acts as a regulator of cell cycle progression and cell proliferation via its interaction with CCDN3. Phosphorylates RB1 in vitro, however the relevance of such result remains to be confirmed in vivo. May also play a role in meiosis, neuron differentiation and may indirectly act as a negative regulator of insulin-responsive glucose transport. This chain is Cyclin-dependent kinase 14 (CDK14), found in Dasypus novemcinctus (Nine-banded armadillo).